The sequence spans 174 residues: uncharacterized protein (174 aa).

The protein belongs to the gamma-class carbonic anhydrase family.

This is an uncharacterized protein from Pseudomonas aeruginosa (strain ATCC 15692 / DSM 22644 / CIP 104116 / JCM 14847 / LMG 12228 / 1C / PRS 101 / PAO1).